Reading from the N-terminus, the 1072-residue chain is 5'-3' exoribonuclease 2 (1072 aa).

A coiled-coil region spans residues 118 to 144; that stretch reads RRFRAAREAMEKEEDKQKFVELLKKQN. Residues 269–286 form a CCHC-type zinc finger; that stretch reads RLCKICGQKGHDAMNCKG. Residues 414–435 show a composition bias toward basic and acidic residues; it reads KETEDRREAGFKRRKLADEARQ. 4 disordered regions span residues 414-459, 509-577, 865-911, and 943-1072; these read KETE…GFSF, QGTS…AEPT, ASRS…GGGG, and GGGY…RGYR. Over residues 518–543 the composition is skewed to low complexity; the sequence is AESTETPAETAAAAPATEEQAAPPAA. A compositionally biased stretch (gly residues) spans 892–911; sequence GPGGGQQGGRGRGGYQGGGG. Residues 955-967 are compositionally biased toward pro residues; that stretch reads GPPPGWQPPPPPG. Composition is skewed to gly residues over residues 983 to 1000, 1025 to 1036, and 1056 to 1072; these read AYGG…GSSR, YGQGGSRGGYQG, and GYRG…RGYR.

This sequence belongs to the 5'-3' exonuclease family. XRN2/RAT1 subfamily. Interacts with rai1; the interaction is direct, stabilizes exr-1 protein structure and may stimulate its exoribonuclease activity. The interaction also stimulates rai1 pyrophosphohydrolase activity, probably by recruiting it to mRNA substrates.

Its subcellular location is the nucleus. Possesses 5'-&gt;3' exoribonuclease activity. Required for the processing of nuclear mRNA and rRNA precursors. May promote the termination of transcription by RNA polymerase II. Essential for vegetative cell growth and chromosome segregation. The chain is 5'-3' exoribonuclease 2 (exr-1) from Neurospora crassa (strain ATCC 24698 / 74-OR23-1A / CBS 708.71 / DSM 1257 / FGSC 987).